A 326-amino-acid polypeptide reads, in one-letter code: Beta-ketoacyl-[acyl-carrier-protein] synthase III (326 aa).

Catalysis depends on residues cysteine 111 and histidine 253. The segment at 254–258 is ACP-binding; sequence QANSR. The active site involves asparagine 283.

It belongs to the thiolase-like superfamily. FabH family. As to quaternary structure, homodimer.

Its subcellular location is the cytoplasm. The catalysed reaction is malonyl-[ACP] + acetyl-CoA + H(+) = 3-oxobutanoyl-[ACP] + CO2 + CoA. The protein operates within lipid metabolism; fatty acid biosynthesis. Its function is as follows. Catalyzes the condensation reaction of fatty acid synthesis by the addition to an acyl acceptor of two carbons from malonyl-ACP. Catalyzes the first condensation reaction which initiates fatty acid synthesis and may therefore play a role in governing the total rate of fatty acid production. Possesses both acetoacetyl-ACP synthase and acetyl transacylase activities. Its substrate specificity determines the biosynthesis of branched-chain and/or straight-chain of fatty acids. The protein is Beta-ketoacyl-[acyl-carrier-protein] synthase III of Latilactobacillus sakei subsp. sakei (strain 23K) (Lactobacillus sakei subsp. sakei).